The chain runs to 396 residues: Phosphoglycerate kinase (396 aa).

Substrate contacts are provided by residues 19–21 (DFN), Arg-35, 58–61 (HLGR), Arg-117, and Arg-150. Residues Lys-201, Glu-323, and 349–352 (GGDT) each bind ATP.

This sequence belongs to the phosphoglycerate kinase family. Monomer.

It is found in the cytoplasm. The enzyme catalyses (2R)-3-phosphoglycerate + ATP = (2R)-3-phospho-glyceroyl phosphate + ADP. The protein operates within carbohydrate degradation; glycolysis; pyruvate from D-glyceraldehyde 3-phosphate: step 2/5. The polypeptide is Phosphoglycerate kinase (Desulfosudis oleivorans (strain DSM 6200 / JCM 39069 / Hxd3) (Desulfococcus oleovorans)).